We begin with the raw amino-acid sequence, 384 residues long: Ribosomal RNA small subunit methyltransferase H (384 aa).

S-adenosyl-L-methionine is bound by residues 99 to 101, D118, Y145, D169, and Q176; that span reads GGH.

Belongs to the methyltransferase superfamily. RsmH family.

The protein resides in the cytoplasm. The catalysed reaction is cytidine(1402) in 16S rRNA + S-adenosyl-L-methionine = N(4)-methylcytidine(1402) in 16S rRNA + S-adenosyl-L-homocysteine + H(+). Functionally, specifically methylates the N4 position of cytidine in position 1402 (C1402) of 16S rRNA. This is Ribosomal RNA small subunit methyltransferase H from Mycobacteroides abscessus (strain ATCC 19977 / DSM 44196 / CCUG 20993 / CIP 104536 / JCM 13569 / NCTC 13031 / TMC 1543 / L948) (Mycobacterium abscessus).